We begin with the raw amino-acid sequence, 309 residues long: Elongation factor Ts (309 aa).

The tract at residues 82–85 is involved in Mg(2+) ion dislocation from EF-Tu; the sequence is TDFV.

This sequence belongs to the EF-Ts family.

Its subcellular location is the cytoplasm. Functionally, associates with the EF-Tu.GDP complex and induces the exchange of GDP to GTP. It remains bound to the aminoacyl-tRNA.EF-Tu.GTP complex up to the GTP hydrolysis stage on the ribosome. The protein is Elongation factor Ts of Rickettsia bellii (strain OSU 85-389).